Reading from the N-terminus, the 1080-residue chain is Histone deacetylase 4 (1080 aa).

Disordered regions lie at residues 1–25 (MSSQSHPDGLSGRDQPVELLNPPRV), 132–165 (KLEQHRQEQELEKQHREQKLQQLKNKEKGKESAV), and 205–312 (TQHS…ISAE). Residues 132–162 (KLEQHRQEQELEKQHREQKLQQLKNKEKGKE) show a composition bias toward basic and acidic residues. Over residues 205-224 (TQHSSLDQSSPPQSGVSGTY) the composition is skewed to polar residues. 2 stretches are compositionally biased toward basic and acidic residues: residues 233–244 (DSKDDFPLRKTA) and 258–273 (KVAERRSSPLLRRKDG). The span at 289–312 (SACNSAPGSGPSSPNNSSNNISAE) shows a compositional bias: low complexity. The PxLPxI/L motif lies at 348–353 (PSLPNI). Disordered stretches follow at residues 506 to 527 (KPNEPARQHESHPEETEEELRE), 558 to 579 (EPIESDEEEAEPQQELESGQRQ), and 622 to 646 (PLSRAQSSPASATFPMSVQEPPTKP). A compositionally biased stretch (basic and acidic residues) spans 509–527 (EPARQHESHPEETEEELRE). Residues 560-571 (IESDEEEAEPQQ) show a composition bias toward acidic residues. Over residues 625 to 637 (RAQSSPASATFPM) the composition is skewed to polar residues. Residues 651 to 1080 (GLVYDTLMLK…DEPMEEEPPL (430 aa)) are histone deacetylase. Zn(2+) is bound by residues cysteine 663, cysteine 665, histidine 671, and cysteine 747. The active site involves histidine 799. The interval 1055–1080 (MASLSVGVKPAEKRPDDEPMEEEPPL) is disordered.

The protein belongs to the histone deacetylase family. HD type 2 subfamily.

It localises to the nucleus. The catalysed reaction is N(6)-acetyl-L-lysyl-[histone] + H2O = L-lysyl-[histone] + acetate. Functionally, responsible for the deacetylation of lysine residues on the N-terminal part of the core histones (H2A, H2B, H3 and H4). Histone deacetylation gives a tag for epigenetic repression and plays an important role in transcriptional regulation, cell cycle progression and developmental events. Histone deacetylases act via the formation of large multiprotein complexes. The polypeptide is Histone deacetylase 4 (HDAC4) (Gallus gallus (Chicken)).